A 632-amino-acid chain; its full sequence is Basic helix-loop-helix ARNT-like protein 1 (632 aa).

Positions Met1 to Arg39 are disordered. Ser17 is subject to Phosphoserine; by GSK3-beta. Thr21 is subject to Phosphothreonine; by GSK3-beta. Residues Asn36 to Gly41 carry the Nuclear localization signal motif. In terms of domain architecture, bHLH spans Asn79 to Leu132. Position 85 is a phosphoserine (Ser85). Residue Ser97 is modified to Phosphoserine; by CK2. A Nuclear export signal 1 motif is present at residues Leu149–Leu159. A PAS 1 domain is found at Ser150–Pro222. Lys259 participates in a covalent cross-link: Glycyl lysine isopeptide (Lys-Gly) (interchain with G-Cter in SUMO2 and SUMO3). Lys266 participates in a covalent cross-link: Glycyl lysine isopeptide (Lys-Gly) (interchain with G-Cter in SUMO); alternate. A Glycyl lysine isopeptide (Lys-Gly) (interchain with G-Cter in SUMO2); alternate cross-link involves residue Lys266. In terms of domain architecture, PAS 2 spans Gln333–Glu403. The short motif at Leu367–Leu375 is the Nuclear export signal 2 element. In terms of domain architecture, PAC spans Asn408–Val451. Disordered stretches follow at residues Pro465 to Ala498 and Gly517 to Asn601. An interaction with CIART region spans residues Arg514–Gln594. Over residues Gly517–Pro527 the composition is skewed to low complexity. Lys544 bears the N6-acetyllysine mark.

As to quaternary structure, component of the circadian clock oscillator which includes the CRY1/2 proteins, CLOCK or NPAS2, BMAL1 or BMAL2, CSNK1D and/or CSNK1E, TIMELESS and the PER1/2/3 proteins. Forms a heterodimer with CLOCK. The CLOCK-BMAL1 heterodimer is required for E-box-dependent transactivation, for CLOCK nuclear translocation and degradation, and, for phosphorylation of both CLOCK and BMAL1. Part of a nuclear complex which also includes RACK1 and PRKCA; RACK1 and PRKCA are recruited to the complex in a circadian manner. Interacts with NPAS2. Interacts with EZH2. Interacts with SUMO3. Interacts with SIRT1. Interacts with AHR. Interacts with ID1, ID2 and ID3. Interacts with DDX4. Interacts with OGT. Interacts with EED and SUZ12. Interacts with MTA1. Interacts with CIART. Interacts with HSP90. Interacts with KAT2B and EP300. Interacts with BHLHE40/DEC1 and BHLHE41/DEC2. Interacts with RELB and the interaction is enhanced in the presence of CLOCK. Interacts with PER1, PER2, CRY1 and CRY2 and this interaction requires a translocation to the nucleus. Interaction of the CLOCK-BMAL1 heterodimer with PER or CRY inhibits transcription activation. Interaction of the CLOCK-BMAL1 with CRY1 is independent of DNA but with PER2 is off DNA. The CLOCK-BMAL1 heterodimer interacts with GSK3B. Interacts with KDM5A. Interacts with KMT2A; in a circadian manner. Interacts with UBE3A. Interacts with PRKCG. Interacts with MAGEL2. Interacts with NCOA2. Interacts with THRAP3. The CLOCK-BMAL1 heterodimer interacts with PASD1. Interacts with PASD1. Interacts with USP9X. Interacts with PIWIL2 (via PIWI domain). Interacts with HDAC3. Interacts with HNF4A. Post-translationally, ubiquitinated, leading to its proteasomal degradation. Deubiquitinated by USP9X. O-glycosylated; contains O-GlcNAc. O-glycosylation by OGT prevents protein degradation by inhibiting ubiquitination. It also stabilizes the CLOCK-BMAL1 heterodimer thereby increasing CLOCK-BMAL1-mediated transcription of genes in the negative loop of the circadian clock such as PER1/2/3 and CRY1/2. In terms of processing, acetylated on Lys-544 by CLOCK during the repression phase of the circadian cycle. Acetylation facilitates recruitment of CRY1 protein and initiates the repression phase of the circadian cycle. Acetylated at Lys-544 by KAT5 during the activation phase of the cycle, leading to recruitment of the positive transcription elongation factor b (P-TEFb) and BRD4, followed by productive elongation of circadian transcripts. Deacetylated by SIRT1, which may result in decreased protein stability. Post-translationally, phosphorylated upon dimerization with CLOCK. Phosphorylation enhances the transcriptional activity, alters the subcellular localization and decreases the stability of the CLOCK-BMAL1 heterodimer by promoting its degradation. Phosphorylation shows circadian variations in the liver with a peak between CT10 to CT14. Phosphorylation at Ser-97 by CK2 is essential for its nuclear localization, its interaction with CLOCK and controls CLOCK nuclear entry. Dephosphorylation at Ser-85 is important for dimerization with CLOCK and transcriptional activity. Sumoylated on Lys-266 upon dimerization with CLOCK. Predominantly conjugated to poly-SUMO2/3 rather than SUMO1 and the level of these conjugates undergo rhythmic variation, peaking at CT9-CT12. Sumoylation localizes it exclusively to the PML body and promotes its ubiquitination in the PML body, ubiquitin-dependent proteasomal degradation and the transcriptional activity of the CLOCK-BMAL1 heterodimer. In terms of processing, undergoes lysosome-mediated degradation in a time-dependent manner in the liver. As to expression, expressed in liver and testis (at protein level). Expressed in the suprachiasmatic nucleus (SCN) in a circadian manner.

The protein resides in the nucleus. The protein localises to the cytoplasm. It is found in the PML body. With respect to regulation, the redox state of the cell can modulate the transcriptional activity of the CLOCK-BMAL1 and NPAS2-BMAL1 heterodimers; NADH and NADPH enhance the DNA-binding activity of the heterodimers. Transcriptional activator which forms a core component of the circadian clock. The circadian clock, an internal time-keeping system, regulates various physiological processes through the generation of approximately 24 hour circadian rhythms in gene expression, which are translated into rhythms in metabolism and behavior. It is derived from the Latin roots 'circa' (about) and 'diem' (day) and acts as an important regulator of a wide array of physiological functions including metabolism, sleep, body temperature, blood pressure, endocrine, immune, cardiovascular, and renal function. Consists of two major components: the central clock, residing in the suprachiasmatic nucleus (SCN) of the brain, and the peripheral clocks that are present in nearly every tissue and organ system. Both the central and peripheral clocks can be reset by environmental cues, also known as Zeitgebers (German for 'timegivers'). The predominant Zeitgeber for the central clock is light, which is sensed by retina and signals directly to the SCN. The central clock entrains the peripheral clocks through neuronal and hormonal signals, body temperature and feeding-related cues, aligning all clocks with the external light/dark cycle. Circadian rhythms allow an organism to achieve temporal homeostasis with its environment at the molecular level by regulating gene expression to create a peak of protein expression once every 24 hours to control when a particular physiological process is most active with respect to the solar day. Transcription and translation of core clock components (CLOCK, NPAS2, BMAL1, BMAL2, PER1, PER2, PER3, CRY1 and CRY2) plays a critical role in rhythm generation, whereas delays imposed by post-translational modifications (PTMs) are important for determining the period (tau) of the rhythms (tau refers to the period of a rhythm and is the length, in time, of one complete cycle). A diurnal rhythm is synchronized with the day/night cycle, while the ultradian and infradian rhythms have a period shorter and longer than 24 hours, respectively. Disruptions in the circadian rhythms contribute to the pathology of cardiovascular diseases, cancer, metabolic syndromes and aging. A transcription/translation feedback loop (TTFL) forms the core of the molecular circadian clock mechanism. Transcription factors, CLOCK or NPAS2 and BMAL1 or BMAL2, form the positive limb of the feedback loop, act in the form of a heterodimer and activate the transcription of core clock genes and clock-controlled genes (involved in key metabolic processes), harboring E-box elements (5'-CACGTG-3') within their promoters. The core clock genes: PER1/2/3 and CRY1/2 which are transcriptional repressors form the negative limb of the feedback loop and interact with the CLOCK|NPAS2-BMAL1|BMAL2 heterodimer inhibiting its activity and thereby negatively regulating their own expression. This heterodimer also activates nuclear receptors NR1D1/2 and RORA/B/G, which form a second feedback loop and which activate and repress BMAL1 transcription, respectively. BMAL1 positively regulates myogenesis and negatively regulates adipogenesis via the transcriptional control of the genes of the canonical Wnt signaling pathway. Plays a role in normal pancreatic beta-cell function; regulates glucose-stimulated insulin secretion via the regulation of antioxidant genes NFE2L2/NRF2 and its targets SESN2, PRDX3, CCLC and CCLM. Negatively regulates the mTORC1 signaling pathway; regulates the expression of MTOR and DEPTOR. Controls diurnal oscillations of Ly6C inflammatory monocytes; rhythmic recruitment of the PRC2 complex imparts diurnal variation to chemokine expression that is necessary to sustain Ly6C monocyte rhythms. Regulates the expression of HSD3B2, STAR, PTGS2, CYP11A1, CYP19A1 and LHCGR in the ovary and also the genes involved in hair growth. Plays an important role in adult hippocampal neurogenesis by regulating the timely entry of neural stem/progenitor cells (NSPCs) into the cell cycle and the number of cell divisions that take place prior to cell-cycle exit. Regulates the circadian expression of CIART and KLF11. The CLOCK-BMAL1 heterodimer regulates the circadian expression of SERPINE1/PAI1, VWF, B3, CCRN4L/NOC, NAMPT, DBP, MYOD1, PPARGC1A, PPARGC1B, SIRT1, GYS2, F7, NGFR, GNRHR, BHLHE40/DEC1, ATF4, MTA1, KLF10 and also genes implicated in glucose and lipid metabolism. Promotes rhythmic chromatin opening, regulating the DNA accessibility of other transcription factors. May play a role in spermatogenesis; contributes to the chromatoid body assembly and physiology. The NPAS2-BMAL1 heterodimer positively regulates the expression of MAOA, F7 and LDHA and modulates the circadian rhythm of daytime contrast sensitivity by regulating the rhythmic expression of adenylate cyclase type 1 (ADCY1) in the retina. The preferred binding motif for the CLOCK-BMAL1 heterodimer is 5'-CACGTGA-3', which contains a flanking adenine nucleotide at the 3-prime end of the canonical 6-nucleotide E-box sequence. CLOCK specifically binds to the half-site 5'-CAC-3', while BMAL1 binds to the half-site 5'-GTGA-3'. The CLOCK-BMAL1 heterodimer also recognizes the non-canonical E-box motifs 5'-AACGTGA-3' and 5'-CATGTGA-3'. Essential for the rhythmic interaction of CLOCK with ASS1 and plays a critical role in positively regulating CLOCK-mediated acetylation of ASS1. Plays a role in protecting against lethal sepsis by limiting the expression of immune checkpoint protein CD274 in macrophages in a PKM2-dependent manner. Regulates the diurnal rhythms of skeletal muscle metabolism via transcriptional activation of genes promoting triglyceride synthesis (DGAT2) and metabolic efficiency (COQ10B). This is Basic helix-loop-helix ARNT-like protein 1 (Bmal1) from Mus musculus (Mouse).